Consider the following 301-residue polypeptide: 4-hydroxy-tetrahydrodipicolinate synthase (301 aa).

Thr46 is a binding site for pyruvate. Tyr134 acts as the Proton donor/acceptor in catalysis. Lys162 functions as the Schiff-base intermediate with substrate in the catalytic mechanism. Residue Ile203 participates in pyruvate binding.

Belongs to the DapA family. Homotetramer; dimer of dimers.

It localises to the cytoplasm. The catalysed reaction is L-aspartate 4-semialdehyde + pyruvate = (2S,4S)-4-hydroxy-2,3,4,5-tetrahydrodipicolinate + H2O + H(+). Its pathway is amino-acid biosynthesis; L-lysine biosynthesis via DAP pathway; (S)-tetrahydrodipicolinate from L-aspartate: step 3/4. Its function is as follows. Catalyzes the condensation of (S)-aspartate-beta-semialdehyde [(S)-ASA] and pyruvate to 4-hydroxy-tetrahydrodipicolinate (HTPA). This chain is 4-hydroxy-tetrahydrodipicolinate synthase, found in Anaplasma marginale (strain St. Maries).